A 211-amino-acid polypeptide reads, in one-letter code: SOSS complex subunit B1 (211 aa).

The segment at residues 22–92 (IVLETGRVTK…TLYTGRGGDL (71 aa)) is a DNA-binding region (OB). Residues 110 to 211 (EPNPEYSAQQ…GKETRRSSKR (102 aa)) form a disordered region. Residues 115 to 128 (YSAQQAPNKTVQND) show a composition bias toward polar residues. 2 stretches are compositionally biased toward pro residues: residues 133–143 (APQPPTGPPAT) and 165–174 (PHPPHTPSHP).

The protein belongs to the SOSS-B family. SOSS-B1 subfamily. Component of the SOSS complex, composed of SOSS-B (SOSS-B1/NABP2 or SOSS-B2/NABP1), SOSS-A/INTS3 and SOSS-C/INIP. SOSS complexes containing SOSS-B1/NABP2 are more abundant than complexes containing SOSS-B2/NABP1. Directly interacts with ATM, SOSS-A/INTS3 and RAD51. Interacts with INTS7. Post-translationally, phosphorylated by ATM in response to DNA damage. Phosphorylation prevents degradation by the proteasome, hence stabilization of the protein and accumulation within cells. In terms of processing, ubiquitinated in a FBXL5-dependent manner, leading to proteasomal degradation.

It localises to the nucleus. In terms of biological role, component of the SOSS complex, a multiprotein complex that functions downstream of the MRN complex to promote DNA repair and G2/M checkpoint. In the SOSS complex, acts as a sensor of single-stranded DNA that binds to single-stranded DNA, in particular to polypyrimidines. The SOSS complex associates with DNA lesions and influences diverse endpoints in the cellular DNA damage response including cell-cycle checkpoint activation, recombinational repair and maintenance of genomic stability. Required for efficient homologous recombination-dependent repair of double-strand breaks (DSBs) and ATM-dependent signaling pathways. The protein is SOSS complex subunit B1 (NABP2) of Bos taurus (Bovine).